The chain runs to 124 residues: Cytochrome c oxidase subunit 4 isoform 1, mitochondrial (124 aa).

Lys-4 carries the post-translational modification N6-acetyllysine; alternate. Lys-4 is subject to N6-succinyllysine; alternate. Phosphoserine is present on residues Ser-31 and Ser-33. Residue Lys-35 is modified to N6-acetyllysine; alternate. The residue at position 35 (Lys-35) is an N6-succinyllysine; alternate. Residue Lys-42 is modified to N6-acetyllysine.

It belongs to the cytochrome c oxidase IV family. In terms of assembly, component of the cytochrome c oxidase (complex IV, CIV), a multisubunit enzyme composed of 14 subunits. The complex is composed of a catalytic core of 3 subunits MT-CO1, MT-CO2 and MT-CO3, encoded in the mitochondrial DNA, and 11 supernumerary subunits COX4I, COX5A, COX5B, COX6A, COX6B, COX6C, COX7A, COX7B, COX7C, COX8 and NDUFA4, which are encoded in the nuclear genome. The complex exists as a monomer or a dimer and forms supercomplexes (SCs) in the inner mitochondrial membrane with NADH-ubiquinone oxidoreductase (complex I, CI) and ubiquinol-cytochrome c oxidoreductase (cytochrome b-c1 complex, complex III, CIII), resulting in different assemblies (supercomplex SCI(1)III(2)IV(1) and megacomplex MCI(2)III(2)IV(2)). Interacts with PHB2; the interaction decreases in absence of SPHK2. Interacts with AFG1L. Interacts with ABCB7; this interaction allows the regulation of cellular iron homeostasis and cellular reactive oxygen species (ROS) levels in cardiomyocytes. Interacts with FLVCR2; this interaction occurs in the absence of heme and is disrupted upon heme binding. Interacts with IRGC.

The protein localises to the mitochondrion inner membrane. Its pathway is energy metabolism; oxidative phosphorylation. Component of the cytochrome c oxidase, the last enzyme in the mitochondrial electron transport chain which drives oxidative phosphorylation. The respiratory chain contains 3 multisubunit complexes succinate dehydrogenase (complex II, CII), ubiquinol-cytochrome c oxidoreductase (cytochrome b-c1 complex, complex III, CIII) and cytochrome c oxidase (complex IV, CIV), that cooperate to transfer electrons derived from NADH and succinate to molecular oxygen, creating an electrochemical gradient over the inner membrane that drives transmembrane transport and the ATP synthase. Cytochrome c oxidase is the component of the respiratory chain that catalyzes the reduction of oxygen to water. Electrons originating from reduced cytochrome c in the intermembrane space (IMS) are transferred via the dinuclear copper A center (CU(A)) of subunit 2 and heme A of subunit 1 to the active site in subunit 1, a binuclear center (BNC) formed by heme A3 and copper B (CU(B)). The BNC reduces molecular oxygen to 2 water molecules using 4 electrons from cytochrome c in the IMS and 4 protons from the mitochondrial matrix. The polypeptide is Cytochrome c oxidase subunit 4 isoform 1, mitochondrial (COX4I1) (Saimiri sciureus (Common squirrel monkey)).